Consider the following 349-residue polypeptide: UDP-3-O-acylglucosamine N-acyltransferase (349 aa).

The active-site Proton acceptor is the His-243.

It belongs to the transferase hexapeptide repeat family. LpxD subfamily. As to quaternary structure, homotrimer.

It catalyses the reaction a UDP-3-O-[(3R)-3-hydroxyacyl]-alpha-D-glucosamine + a (3R)-hydroxyacyl-[ACP] = a UDP-2-N,3-O-bis[(3R)-3-hydroxyacyl]-alpha-D-glucosamine + holo-[ACP] + H(+). Its pathway is bacterial outer membrane biogenesis; LPS lipid A biosynthesis. Its function is as follows. Catalyzes the N-acylation of UDP-3-O-acylglucosamine using 3-hydroxyacyl-ACP as the acyl donor. Is involved in the biosynthesis of lipid A, a phosphorylated glycolipid that anchors the lipopolysaccharide to the outer membrane of the cell. The chain is UDP-3-O-acylglucosamine N-acyltransferase from Myxococcus xanthus (strain DK1622).